Here is a 387-residue protein sequence, read N- to C-terminus: Solute carrier family 25 protein Shawn (387 aa).

3 Solcar repeats span residues 37–156 (IRPL…FKAR), 179–263 (IPFL…LKSS), and 269–366 (PTFS…GKSF). A run of 6 helical transmembrane segments spans residues 43–63 (VASA…LDVI), 128–148 (LWSG…IYFV), 179–199 (IPFL…VTCV), 235–255 (LWRG…IYWT), 275–295 (FAAG…FDVV), and 337–357 (AIFS…AIMI).

It belongs to the mitochondrial carrier (TC 2.A.29) family.

It localises to the mitochondrion inner membrane. In terms of biological role, mitochondrial transporter required for glutathione import into mitochondria. This Drosophila melanogaster (Fruit fly) protein is Solute carrier family 25 protein Shawn.